The sequence spans 421 residues: Core-capsid bridging protein (421 aa).

The protein belongs to the adenoviridae core-capsid bridging protein family. In terms of assembly, monomer. Homodimer. Exists in equilibrium between monomers and dimers in solution. Interacts with the histone-like nucleoprotein; this interactions bridge the virus core to the capsid. Interacts with core protein X; this interactions bridge the virus core to the capsid. Interacts with the endosome lysis protein VI; this interactions bridge the virus core to the capsid. Interacts with the peripentonal hexons. Interacts with host NPM1; this interaction might play a role in virus assembly.

Its subcellular location is the virion. It localises to the host nucleus. The protein resides in the host nucleolus. Functionally, associates loosely with the viral DNA to form an outer shell around the nucleoprotein-DNA complex and links it with the capsid by binding the endosome lysis protein. Dissociates from the viral genome during entry. Might be involved in nuclear capsid assembly of the viral particles through its association with NPM1/nucleophosmin. This chain is Core-capsid bridging protein, found in Canine adenovirus serotype 1 (strain RI261) (CAdV-1).